The chain runs to 348 residues: GMP reductase (348 aa).

108–131 (ADFIKLRQILALSPSLKFICIDVA) lines the NADP(+) pocket. 2 residues coordinate K(+): G181 and G183. C186 serves as the catalytic Thioimidate intermediate. 216-239 (IVSDGGCTMPGDVAKAFGGGADFV) serves as a coordination point for NADP(+).

Belongs to the IMPDH/GMPR family. GuaC type 1 subfamily. In terms of assembly, homotetramer.

The enzyme catalyses IMP + NH4(+) + NADP(+) = GMP + NADPH + 2 H(+). In terms of biological role, catalyzes the irreversible NADPH-dependent deamination of GMP to IMP. It functions in the conversion of nucleobase, nucleoside and nucleotide derivatives of G to A nucleotides, and in maintaining the intracellular balance of A and G nucleotides. The protein is GMP reductase of Edwardsiella ictaluri (strain 93-146).